A 580-amino-acid polypeptide reads, in one-letter code: Pescadillo homolog (580 aa).

The segment covering 291-303 (EPEEENEVDEFPA) has biased composition (acidic residues). Residues 291-321 (EPEEENEVDEFPADPENAGQEEEQKKQLQEE) are disordered. Residues 312–321 (EEQKKQLQEE) are compositionally biased toward basic and acidic residues. The BRCT domain maps to 323 to 416 (KHKSMFVGLK…MLLPVEDYFP (94 aa)). Residues 448–496 (KGENPEDDDDDDEEDDEDEEEDDEDEDDEENEEEEEDKKLRHLENKKVG) are disordered. A compositionally biased stretch (acidic residues) spans 452 to 483 (PEDDDDDDEEDDEDEEEDDEDEDDEENEEEEE). Residues 484-494 (DKKLRHLENKK) show a composition bias toward basic and acidic residues.

This sequence belongs to the pescadillo family. In terms of assembly, component of the PeBoW complex, composed of bop1, pes1 and wdr12. The complex is held together by bop1, which interacts with pes1 via its N-terminal domain and with wdr12 via a high-affinity interaction between the seven-bladed beta-propeller domains of the 2 proteins. The PeBoW complex associates with the 66S pre-ribosome.

The protein resides in the nucleus. It localises to the nucleolus. It is found in the nucleoplasm. In terms of biological role, component of the PeBoW complex, which is required for maturation of 28S and 5.8S ribosomal RNAs and formation of the 60S ribosome. The chain is Pescadillo homolog (pes1) from Xenopus tropicalis (Western clawed frog).